Here is a 685-residue protein sequence, read N- to C-terminus: Threonine--tRNA ligase (685 aa).

The disordered stretch occupies residues 1 to 28; it reads MTSPAPEHSAAPLRVPAGTTAGTAVREA. Residues 1-65 enclose the TGS domain; the sequence is MTSPAPEHSA…EVDVDVEPVA (65 aa). The interval 262–568 is catalytic; it reads DHRKLGTELD…LTEHYAGAFP (307 aa). Residues Cys-367, His-418, and His-545 each coordinate Zn(2+).

This sequence belongs to the class-II aminoacyl-tRNA synthetase family. In terms of assembly, homodimer. Zn(2+) is required as a cofactor.

The protein resides in the cytoplasm. The enzyme catalyses tRNA(Thr) + L-threonine + ATP = L-threonyl-tRNA(Thr) + AMP + diphosphate + H(+). In terms of biological role, catalyzes the attachment of threonine to tRNA(Thr) in a two-step reaction: L-threonine is first activated by ATP to form Thr-AMP and then transferred to the acceptor end of tRNA(Thr). Also edits incorrectly charged L-seryl-tRNA(Thr). This is Threonine--tRNA ligase from Rhodococcus erythropolis (strain PR4 / NBRC 100887).